We begin with the raw amino-acid sequence, 293 residues long: Glycine--tRNA ligase alpha subunit (293 aa).

Belongs to the class-II aminoacyl-tRNA synthetase family. Tetramer of two alpha and two beta subunits.

Its subcellular location is the cytoplasm. It carries out the reaction tRNA(Gly) + glycine + ATP = glycyl-tRNA(Gly) + AMP + diphosphate. In Wolinella succinogenes (strain ATCC 29543 / DSM 1740 / CCUG 13145 / JCM 31913 / LMG 7466 / NCTC 11488 / FDC 602W) (Vibrio succinogenes), this protein is Glycine--tRNA ligase alpha subunit.